Reading from the N-terminus, the 299-residue chain is Aspartate carbamoyltransferase catalytic subunit (299 aa).

The carbamoyl phosphate site is built by arginine 51 and threonine 52. Lysine 79 lines the L-aspartate pocket. Positions 101, 130, and 133 each coordinate carbamoyl phosphate. Residues arginine 163 and arginine 215 each contribute to the L-aspartate site. Carbamoyl phosphate is bound by residues glycine 256 and proline 257.

Belongs to the aspartate/ornithine carbamoyltransferase superfamily. ATCase family. In terms of assembly, heterododecamer (2C3:3R2) of six catalytic PyrB chains organized as two trimers (C3), and six regulatory PyrI chains organized as three dimers (R2).

It carries out the reaction carbamoyl phosphate + L-aspartate = N-carbamoyl-L-aspartate + phosphate + H(+). It functions in the pathway pyrimidine metabolism; UMP biosynthesis via de novo pathway; (S)-dihydroorotate from bicarbonate: step 2/3. Catalyzes the condensation of carbamoyl phosphate and aspartate to form carbamoyl aspartate and inorganic phosphate, the committed step in the de novo pyrimidine nucleotide biosynthesis pathway. In Ehrlichia chaffeensis (strain ATCC CRL-10679 / Arkansas), this protein is Aspartate carbamoyltransferase catalytic subunit.